Consider the following 464-residue polypeptide: ATP synthase subunit beta (464 aa).

Position 152–159 (152–159 (GGAGVGKS)) interacts with ATP.

The protein belongs to the ATPase alpha/beta chains family. As to quaternary structure, F-type ATPases have 2 components, CF(1) - the catalytic core - and CF(0) - the membrane proton channel. CF(1) has five subunits: alpha(3), beta(3), gamma(1), delta(1), epsilon(1). CF(0) has three main subunits: a(1), b(2) and c(9-12). The alpha and beta chains form an alternating ring which encloses part of the gamma chain. CF(1) is attached to CF(0) by a central stalk formed by the gamma and epsilon chains, while a peripheral stalk is formed by the delta and b chains.

Its subcellular location is the cell membrane. The catalysed reaction is ATP + H2O + 4 H(+)(in) = ADP + phosphate + 5 H(+)(out). Its function is as follows. Produces ATP from ADP in the presence of a proton gradient across the membrane. The catalytic sites are hosted primarily by the beta subunits. The polypeptide is ATP synthase subunit beta (Protochlamydia amoebophila (strain UWE25)).